Consider the following 116-residue polypeptide: Putative UPF0320 protein YLL065W (116 aa).

It belongs to the UPF0320 family.

This chain is Putative UPF0320 protein YLL065W, found in Saccharomyces cerevisiae (strain ATCC 204508 / S288c) (Baker's yeast).